The chain runs to 372 residues: Aminomethyltransferase (372 aa).

The protein belongs to the GcvT family. In terms of assembly, the glycine cleavage system is composed of four proteins: P, T, L and H.

The catalysed reaction is N(6)-[(R)-S(8)-aminomethyldihydrolipoyl]-L-lysyl-[protein] + (6S)-5,6,7,8-tetrahydrofolate = N(6)-[(R)-dihydrolipoyl]-L-lysyl-[protein] + (6R)-5,10-methylene-5,6,7,8-tetrahydrofolate + NH4(+). Functionally, the glycine cleavage system catalyzes the degradation of glycine. The chain is Aminomethyltransferase from Burkholderia multivorans (strain ATCC 17616 / 249).